The chain runs to 72 residues: MSRRKVCRFTVDGVKEIDYKDVNKLKAYITETGKIVPSRVTGTSAKYQRQLATAIKRARFLALLPYCDRHFN.

It belongs to the bacterial ribosomal protein bS18 family. As to quaternary structure, part of the 30S ribosomal subunit. Forms a tight heterodimer with protein bS6.

Functionally, binds as a heterodimer with protein bS6 to the central domain of the 16S rRNA, where it helps stabilize the platform of the 30S subunit. The chain is Small ribosomal subunit protein bS18 from Francisella philomiragia subsp. philomiragia (strain ATCC 25017 / CCUG 19701 / FSC 153 / O#319-036).